Reading from the N-terminus, the 428-residue chain is Histidinol dehydrogenase (428 aa).

NAD(+) contacts are provided by Tyr127, Gln185, and Asn208. Substrate contacts are provided by Ser234, Gln256, and His259. Gln256 and His259 together coordinate Zn(2+). Catalysis depends on proton acceptor residues Glu323 and His324. Positions 324, 357, 411, and 416 each coordinate substrate. Residue Asp357 participates in Zn(2+) binding. Zn(2+) is bound at residue His416.

The protein belongs to the histidinol dehydrogenase family. It depends on Zn(2+) as a cofactor.

It carries out the reaction L-histidinol + 2 NAD(+) + H2O = L-histidine + 2 NADH + 3 H(+). It functions in the pathway amino-acid biosynthesis; L-histidine biosynthesis; L-histidine from 5-phospho-alpha-D-ribose 1-diphosphate: step 9/9. Functionally, catalyzes the sequential NAD-dependent oxidations of L-histidinol to L-histidinaldehyde and then to L-histidine. In Mannheimia succiniciproducens (strain KCTC 0769BP / MBEL55E), this protein is Histidinol dehydrogenase.